The following is a 254-amino-acid chain: Sporulation protein YunB (254 aa).

Residues 18–38 form a helical membrane-spanning segment; it reads YVMLLSVVFFILSTTVSLWMI. Residues 226–254 are disordered; that stretch reads SGGSGVTPSVQLPSSKENGADSKKEKSSK. The segment covering 231 to 242 has biased composition (polar residues); it reads VTPSVQLPSSKE. Residues 243–254 show a composition bias toward basic and acidic residues; it reads NGADSKKEKSSK.

It is found in the cell membrane. Its function is as follows. Required for sporulation. The polypeptide is Sporulation protein YunB (yunB) (Bacillus subtilis (strain 168)).